We begin with the raw amino-acid sequence, 242 residues long: Leucyl/phenylalanyl-tRNA--protein transferase (242 aa).

The protein belongs to the L/F-transferase family.

Its subcellular location is the cytoplasm. It catalyses the reaction N-terminal L-lysyl-[protein] + L-leucyl-tRNA(Leu) = N-terminal L-leucyl-L-lysyl-[protein] + tRNA(Leu) + H(+). It carries out the reaction N-terminal L-arginyl-[protein] + L-leucyl-tRNA(Leu) = N-terminal L-leucyl-L-arginyl-[protein] + tRNA(Leu) + H(+). The enzyme catalyses L-phenylalanyl-tRNA(Phe) + an N-terminal L-alpha-aminoacyl-[protein] = an N-terminal L-phenylalanyl-L-alpha-aminoacyl-[protein] + tRNA(Phe). Functions in the N-end rule pathway of protein degradation where it conjugates Leu, Phe and, less efficiently, Met from aminoacyl-tRNAs to the N-termini of proteins containing an N-terminal arginine or lysine. The chain is Leucyl/phenylalanyl-tRNA--protein transferase from Alcanivorax borkumensis (strain ATCC 700651 / DSM 11573 / NCIMB 13689 / SK2).